A 225-amino-acid polypeptide reads, in one-letter code: Ribonuclease 3 (225 aa).

One can recognise an RNase III domain in the interval 5–127 (MNKLTSKLGY…IIGAIYLDSD (123 aa)). Glu-40 is a binding site for Mg(2+). Residue Asp-44 is part of the active site. Asp-113 and Glu-116 together coordinate Mg(2+). The active site involves Glu-116. The 71-residue stretch at 154–224 (DPKTRLQEFL…AETALEQLTN (71 aa)) folds into the DRBM domain.

Belongs to the ribonuclease III family. In terms of assembly, homodimer. Mg(2+) serves as cofactor.

It localises to the cytoplasm. The catalysed reaction is Endonucleolytic cleavage to 5'-phosphomonoester.. Its function is as follows. Digests double-stranded RNA. Involved in the processing of primary rRNA transcript to yield the immediate precursors to the large and small rRNAs (23S and 16S). Processes some mRNAs, and tRNAs when they are encoded in the rRNA operon. Processes pre-crRNA and tracrRNA of type II CRISPR loci if present in the organism. This is Ribonuclease 3 from Vibrio cholerae serotype O1 (strain ATCC 39315 / El Tor Inaba N16961).